The following is a 101-amino-acid chain: NADH-quinone oxidoreductase subunit K (101 aa).

Transmembrane regions (helical) follow at residues 4-24 (VYDY…GIML), 29-49 (IILL…NFIA), and 61-81 (VFVF…LAIV).

Belongs to the complex I subunit 4L family. As to quaternary structure, NDH-1 is composed of 14 different subunits. Subunits NuoA, H, J, K, L, M, N constitute the membrane sector of the complex.

Its subcellular location is the cell inner membrane. It catalyses the reaction a quinone + NADH + 5 H(+)(in) = a quinol + NAD(+) + 4 H(+)(out). NDH-1 shuttles electrons from NADH, via FMN and iron-sulfur (Fe-S) centers, to quinones in the respiratory chain. The immediate electron acceptor for the enzyme in this species is believed to be ubiquinone. Couples the redox reaction to proton translocation (for every two electrons transferred, four hydrogen ions are translocated across the cytoplasmic membrane), and thus conserves the redox energy in a proton gradient. This chain is NADH-quinone oxidoreductase subunit K, found in Legionella pneumophila (strain Paris).